Consider the following 357-residue polypeptide: MFDKLQSIKDKFQTIEQQLSDPEVVADQNRFRKLNKEYSSLKEIVRAYDEWSRTKKQLDEAHSMQKNENDPEMRALVEEEAGELQERLPKLEQQLKILLLPKDEADSRNAIIEIRAGTGGDEAGLFAADLMRMYQRYAERQGWSCQTLEVSEGSVPGSLKEVSLEVSGHNVYGILKFESGVHRVQRVPETETQGRIHTSAASVAVLPEAEEVDVEIRKEDLLIDTFRSGGKGGQNVNKVETAVRITHVPSGIVVACQEERSQLQNRERAMKMLRSKLYDLQIAEQQKSRADLRRSMVTTGDRSAKIRTYNFPQSRVTDHRIGFTSHALPQIMQGELDPLIEALRMHDQAERLQAETA.

Position 234 is an N5-methylglutamine (Gln-234).

The protein belongs to the prokaryotic/mitochondrial release factor family. Methylated by PrmC. Methylation increases the termination efficiency of RF1.

It localises to the cytoplasm. Its function is as follows. Peptide chain release factor 1 directs the termination of translation in response to the peptide chain termination codons UAG and UAA. The sequence is that of Peptide chain release factor 1 from Chlorobaculum tepidum (strain ATCC 49652 / DSM 12025 / NBRC 103806 / TLS) (Chlorobium tepidum).